The following is a 510-amino-acid chain: Calmodulin-binding receptor-like cytoplasmic kinase 3 (510 aa).

The N-terminal stretch at 1 to 30 is a signal peptide; it reads MGGDDLSFTRLVITALFGLLMLLQIKETSA. Positions 166-178 are enriched in polar residues; it reads VSSFEMSPSSEKI. Positions 166-209 are disordered; it reads VSSFEMSPSSEKIPQSPFRAPPSPSRVPQSPSRYAMSPRPSRLG. At Thr-214 the chain carries Phosphothreonine. The Protein kinase domain occupies 225-499; sequence FADSHQIGEG…MEAVGKQLWA (275 aa). Residues 231–239 and Lys-253 each bind ATP; that span reads IGEGGFGVV. The interval 240–265 is caM-binding; it reads FKGVLDDGQVVAIKRAKKEHFENLRT. Asp-350 (proton acceptor) is an active-site residue. At Ser-354 the chain carries Phosphoserine. Residues Thr-386 and Thr-391 each carry the phosphothreonine modification. A Phosphotyrosine modification is found at Tyr-399.

This sequence belongs to the protein kinase superfamily. Ser/Thr protein kinase family. In terms of assembly, interacts with calmodulin (CaM) in a Ca(2+)-dependent manner.

Its subcellular location is the cytoplasm. It carries out the reaction L-seryl-[protein] + ATP = O-phospho-L-seryl-[protein] + ADP + H(+). The catalysed reaction is L-threonyl-[protein] + ATP = O-phospho-L-threonyl-[protein] + ADP + H(+). This Arabidopsis thaliana (Mouse-ear cress) protein is Calmodulin-binding receptor-like cytoplasmic kinase 3 (CRCK3).